A 560-amino-acid polypeptide reads, in one-letter code: Formate--tetrahydrofolate ligase (560 aa).

Position 69–76 (69–76) interacts with ATP; that stretch reads TPAGEGKS.

The protein belongs to the formate--tetrahydrofolate ligase family.

It catalyses the reaction (6S)-5,6,7,8-tetrahydrofolate + formate + ATP = (6R)-10-formyltetrahydrofolate + ADP + phosphate. Its pathway is one-carbon metabolism; tetrahydrofolate interconversion. This chain is Formate--tetrahydrofolate ligase, found in Bacillus pumilus (strain SAFR-032).